Here is a 428-residue protein sequence, read N- to C-terminus: Adenylosuccinate synthetase (428 aa).

Residues 12-18 (GDEGKGK) and 40-42 (GHT) contribute to the GTP site. Asp13 (proton acceptor) is an active-site residue. Asp13 and Gly40 together coordinate Mg(2+). IMP-binding positions include 13–16 (DEGK), 38–41 (NAGH), Thr128, Arg142, Gln223, Thr238, and Arg302. Residue His41 is the Proton donor of the active site. A substrate-binding site is contributed by 298-304 (VTTGRPR). Residues Arg304, 330 to 332 (KLD), and 412 to 414 (GTG) each bind GTP.

The protein belongs to the adenylosuccinate synthetase family. Homodimer. Requires Mg(2+) as cofactor.

The protein resides in the cytoplasm. The enzyme catalyses IMP + L-aspartate + GTP = N(6)-(1,2-dicarboxyethyl)-AMP + GDP + phosphate + 2 H(+). It participates in purine metabolism; AMP biosynthesis via de novo pathway; AMP from IMP: step 1/2. In terms of biological role, plays an important role in the de novo pathway of purine nucleotide biosynthesis. Catalyzes the first committed step in the biosynthesis of AMP from IMP. This Bifidobacterium animalis subsp. lactis (strain AD011) protein is Adenylosuccinate synthetase.